The chain runs to 674 residues: Probable L-type lectin-domain containing receptor kinase I.5 (674 aa).

Positions 1–22 (MSKGLFLIWLISSFHLISFSTS) are cleaved as a signal peptide. The Extracellular segment spans residues 23–286 (SKDTSFVFNG…RPRAEHKKVQ (264 aa)). A legume-lectin like region spans residues 25-258 (DTSFVFNGFG…YHYLLGWSFS (234 aa)). Residues Asn-124, Asn-181, Asn-185, Asn-204, and Asn-225 are each glycosylated (N-linked (GlcNAc...) asparagine). The chain crosses the membrane as a helical span at residues 287 to 307 (FALIIALPVILAIVVMAVLAG). Over 308–674 (VYYHRKKKYA…DHEQPLEFKS (367 aa)) the chain is Cytoplasmic. Residues 344–625 (FHKDRFLGRG…LPLPDFSPYT (282 aa)) enclose the Protein kinase domain. Residues 350–358 (LGRGGFGEV) and Lys-372 contribute to the ATP site. The active-site Proton acceptor is Asp-468. Residues 649 to 662 (NWSAPSASSSSANN) are compositionally biased toward low complexity. Positions 649–674 (NWSAPSASSSSANNSKDHEQPLEFKS) are disordered. A compositionally biased stretch (basic and acidic residues) spans 663 to 674 (SKDHEQPLEFKS).

It in the C-terminal section; belongs to the protein kinase superfamily. Ser/Thr protein kinase family. The protein in the N-terminal section; belongs to the leguminous lectin family.

It localises to the cell membrane. The enzyme catalyses L-seryl-[protein] + ATP = O-phospho-L-seryl-[protein] + ADP + H(+). It carries out the reaction L-threonyl-[protein] + ATP = O-phospho-L-threonyl-[protein] + ADP + H(+). In Arabidopsis thaliana (Mouse-ear cress), this protein is Probable L-type lectin-domain containing receptor kinase I.5 (LECRK15).